Consider the following 553-residue polypeptide: Thioredoxin domain-containing protein 2 (553 aa).

Disordered stretches follow at residues 1–37 (MDVD…DANE) and 77–442 (TEES…EETM). Over residues 99-143 (PKQDDSPKSSEETIQPKEGDIPKAPEETIQSKKEDLPKSSEKAIQ) the composition is skewed to basic and acidic residues. 22 repeat units span residues 113–127 (QPKE…EETI), 128–142 (QSKK…EKAI), 143–157 (QPKE…AKPI), 158–172 (QPKL…VKPS), 173–187 (QPKE…EETI), 188–202 (QSKK…EEAI), 203–217 (QPKE…AKPI), 218–232 (QPKL…VKPS), 233–247 (QPKE…EETI), 248–262 (QPKE…AKPI), 263–277 (QPKL…VKPS), 278–292 (QPKE…EEAI), 293–307 (QPKE…EEAI), 308–322 (QPKE…EEAI), 323–337 (QPKE…EEAI), 338–352 (QPKE…EETI), 353–367 (QPKK…EEAI), 368–382 (QPKE…KQAI), 383–397 (QPKE…EEAI), 398–412 (PPKE…EETI), 413–427 (QPKE…EEAT), and 428–442 (PSKE…EETM). Positions 113-442 (QPKEGDIPKA…DILKPEEETM (330 aa)) are 22 X 15 AA approximate tandem repeat of Q-P-K-X-G-D-I-P-K-S-[PS]-E-[KE]-X-I. The span at 173–209 (QPKEGDIPKAPEETIQSKKEDLPKSSEEAIQPKEGDI) shows a compositional bias: basic and acidic residues. Over residues 233–254 (QPKESDIPKSPEETIQPKEGDI) the composition is skewed to basic and acidic residues. 2 stretches are compositionally biased toward basic and acidic residues: residues 278 to 376 (QPKE…DIPK) and 385 to 439 (KEGD…KPEE). Residue serine 362 is modified to Phosphoserine. Serine 392 bears the Phosphoserine mark. The Thioredoxin domain occupies 429–553 (SKEGDILKPE…KLEAVIAELK (125 aa)). A disulfide bridge links cysteine 480 with cysteine 483.

As to expression, testis-specific. Only expressed during spermiogenesis, prominently in round and elongating spermatids.

Its subcellular location is the cytoplasm. In terms of biological role, probably plays a regulatory role in sperm development. May participate in regulation of fibrous sheath (FS) assembly by supporting the formation of disulfide bonds during sperm tail morphogenesis. May also be required to rectify incorrect disulfide pairing and generate suitable pairs between the FS constituents. Can reduce disulfide bonds in vitro in the presence of NADP and thioredoxin reductase. The chain is Thioredoxin domain-containing protein 2 (TXNDC2) from Homo sapiens (Human).